Here is a 527-residue protein sequence, read N- to C-terminus: Dual specificity protein kinase shkA (527 aa).

Positions 45-304 (ITTESILGDG…GIVSELEEII (260 aa)) constitute a Protein kinase domain. ATP contacts are provided by residues 51–59 (LGDGSFGTV) and Lys72. Residue Asp167 is the Proton acceptor of the active site. Residues 424 to 513 (WFHGDISTSE…INTPCLGSRF (90 aa)) form the SH2 domain.

This sequence belongs to the protein kinase superfamily. TKL Ser/Thr protein kinase family. SH2 domain-containing protein kinase subfamily.

It localises to the membrane. The enzyme catalyses L-seryl-[protein] + ATP = O-phospho-L-seryl-[protein] + ADP + H(+). It carries out the reaction L-threonyl-[protein] + ATP = O-phospho-L-threonyl-[protein] + ADP + H(+). Required for proper chemotaxis and phagocytosis; proper spatiotemporal control of F-actin levels in chemotaxing cells. Negative regulator of the PI3K (phosphatidylinositol 3 kinase) pathway. Predominantly phosphorylates serines and threonines and tyrosines at a lower level. The chain is Dual specificity protein kinase shkA (shkA) from Dictyostelium discoideum (Social amoeba).